We begin with the raw amino-acid sequence, 380 residues long: Cytochrome b (380 aa).

4 helical membrane-spanning segments follow: residues 33–53 (FGSL…FLAM), 77–98 (WLIR…YMHI), 113–133 (WNIG…GYVL), and 178–198 (FFAF…IHLL). His83 and His97 together coordinate heme b. Heme b is bound by residues His182 and His196. Residue His201 coordinates a ubiquinone. Helical transmembrane passes span 226–246 (YKDL…ALFS), 288–308 (LGGV…PLLH), 320–340 (ITQF…WIGG), and 347–367 (FIII…VLFP).

Belongs to the cytochrome b family. In terms of assembly, the cytochrome bc1 complex contains 3 respiratory subunits (MT-CYB, CYC1 and UQCRFS1), 2 core proteins (UQCRC1 and UQCRC2) and probably 6 low-molecular weight proteins. Heme b is required as a cofactor.

It is found in the mitochondrion inner membrane. Component of the ubiquinol-cytochrome c reductase complex (complex III or cytochrome b-c1 complex) that is part of the mitochondrial respiratory chain. The b-c1 complex mediates electron transfer from ubiquinol to cytochrome c. Contributes to the generation of a proton gradient across the mitochondrial membrane that is then used for ATP synthesis. The protein is Cytochrome b (mt-cyb) of Carassius auratus (Goldfish).